A 182-amino-acid chain; its full sequence is Adenine phosphoribosyltransferase (182 aa).

The protein belongs to the purine/pyrimidine phosphoribosyltransferase family. In terms of assembly, homodimer.

Its subcellular location is the cytoplasm. It carries out the reaction AMP + diphosphate = 5-phospho-alpha-D-ribose 1-diphosphate + adenine. It participates in purine metabolism; AMP biosynthesis via salvage pathway; AMP from adenine: step 1/1. Catalyzes a salvage reaction resulting in the formation of AMP, that is energically less costly than de novo synthesis. This chain is Adenine phosphoribosyltransferase, found in Campylobacter jejuni subsp. jejuni serotype O:2 (strain ATCC 700819 / NCTC 11168).